A 355-amino-acid polypeptide reads, in one-letter code: DNA-binding protein RHL1 (355 aa).

3 disordered regions span residues 1–26 (MVRASSSKKGGSKGGDKDDAESKQRK), 181–215 (DFQGGAGGAASVKKLASPEIGSQPTETDSPEVDNE), and 229–355 (IQVT…SSKA). Residues 14–23 (GGDKDDAESK) are compositionally biased toward basic and acidic residues. 2 stretches are compositionally biased toward low complexity: residues 230 to 246 (QVTPPVQLTPPVQVTPV) and 260 to 274 (AETSSEASSGESEGN). Basic and acidic residues-rich tracts occupy residues 281–296 (KPLLEPESSTRSREES) and 309–326 (LPEELPAKREKLKSKDSK). Residues 344–355 (AGTSKAKSSSKA) are compositionally biased toward low complexity.

In terms of assembly, interacts with BIN4 and TOP6A, but not with TOP6B. In terms of tissue distribution, expressed inproliferating and endoreduplicating cells.

It localises to the nucleus. Functionally, component of the DNA topoisomerase VI complex involved in chromatin organization and progression of endoreduplication cycles. Binds to DNA. Required for endoreduplication beyond 8C. This is DNA-binding protein RHL1 (RHL1) from Arabidopsis thaliana (Mouse-ear cress).